The primary structure comprises 1353 residues: Trifunctional purine biosynthetic protein adenosine-3 (1353 aa).

In terms of domain architecture, ATP-grasp spans 114–321 (KDFMLRHGIP…LFDVMEACCS (208 aa)). ATP contacts are provided by residues 193 to 196 (EELL), E200, R223, and N232. Residues E291 and N293 each coordinate Mg(2+). Positions 441 to 1155 (GLSYKDSGVD…QKMLSQRRKR (715 aa)) are AIRS domain. 2 positions are modified to phosphoserine: S814 and S816. Positions 1153-1353 (RKRVAVLISG…ALISPEVSSQ (201 aa)) are GART domain. Position 1164-1166 (1164-1166 (GSN)) interacts with N(1)-(5-phospho-beta-D-ribosyl)glycinamide. Residues R1219, 1244 to 1247 (MRVL), and N1261 each bind (6R)-10-formyltetrahydrofolate. H1263 (proton donor) is an active-site residue. 1295-1299 (DEGVD) contacts (6R)-10-formyltetrahydrofolate. 1325–1328 (HKAE) is a binding site for N(1)-(5-phospho-beta-D-ribosyl)glycinamide.

This sequence in the N-terminal section; belongs to the GARS family. The protein in the central section; belongs to the AIR synthase family. In the C-terminal section; belongs to the GART family. Homodimer. Mg(2+) is required as a cofactor. The cofactor is Mn(2+).

The catalysed reaction is 5-phospho-beta-D-ribosylamine + glycine + ATP = N(1)-(5-phospho-beta-D-ribosyl)glycinamide + ADP + phosphate + H(+). It catalyses the reaction 2-formamido-N(1)-(5-O-phospho-beta-D-ribosyl)acetamidine + ATP = 5-amino-1-(5-phospho-beta-D-ribosyl)imidazole + ADP + phosphate + H(+). It carries out the reaction N(1)-(5-phospho-beta-D-ribosyl)glycinamide + (6R)-10-formyltetrahydrofolate = N(2)-formyl-N(1)-(5-phospho-beta-D-ribosyl)glycinamide + (6S)-5,6,7,8-tetrahydrofolate + H(+). It functions in the pathway purine metabolism; IMP biosynthesis via de novo pathway; 5-amino-1-(5-phospho-D-ribosyl)imidazole from N(2)-formyl-N(1)-(5-phospho-D-ribosyl)glycinamide: step 2/2. The protein operates within purine metabolism; IMP biosynthesis via de novo pathway; N(1)-(5-phospho-D-ribosyl)glycinamide from 5-phospho-alpha-D-ribose 1-diphosphate: step 2/2. It participates in purine metabolism; IMP biosynthesis via de novo pathway; N(2)-formyl-N(1)-(5-phospho-D-ribosyl)glycinamide from N(1)-(5-phospho-D-ribosyl)glycinamide (10-formyl THF route): step 1/1. In terms of biological role, trifunctional enzyme that catalyzes three distinct reactions as part of the 'de novo' inosine monophosphate biosynthetic pathway. This chain is Trifunctional purine biosynthetic protein adenosine-3, found in Drosophila melanogaster (Fruit fly).